A 498-amino-acid chain; its full sequence is Lysine--tRNA ligase (498 aa).

Mg(2+)-binding residues include Glu409 and Glu416.

This sequence belongs to the class-II aminoacyl-tRNA synthetase family. Homodimer. Requires Mg(2+) as cofactor.

The protein localises to the cytoplasm. It catalyses the reaction tRNA(Lys) + L-lysine + ATP = L-lysyl-tRNA(Lys) + AMP + diphosphate. This Dichelobacter nodosus (strain VCS1703A) protein is Lysine--tRNA ligase.